The sequence spans 391 residues: Transcription factor TCP3 (391 aa).

The tract at residues 1–34 (MAPDNDHFLDSPSPPLLEMRHHQSATENGGGCGE) is disordered. Residues 49 to 107 (RKDRHSKVCTAKGPRDRRVRLSAPTAIQFYDVQDRLGFDRPSKAVDWLITKAKSAIDDL) enclose the TCP domain. Disordered stretches follow at residues 122 to 168 (HAAA…PASM), 317 to 345 (HHHH…PGIH), and 363 to 391 (FRIP…DSRH). Positions 381-391 (KPSSASSDSRH) are enriched in polar residues.

As to quaternary structure, interacts with SPL. Interacts with KIN10; KIN11 and FLZ3. Expressed in cotyledons, particularly in the vascular region, in leaves, roots, buds, flowers and immature siliques.

Its subcellular location is the nucleus. Functionally, plays a pivotal role in the control of morphogenesis of shoot organs by negatively regulating the expression of boundary-specific genes such as CUC genes, probably through the induction of miRNA (e.g. miR164). Participates in ovule development. The sequence is that of Transcription factor TCP3 (TCP3) from Arabidopsis thaliana (Mouse-ear cress).